Consider the following 247-residue polypeptide: Carboxy-S-adenosyl-L-methionine synthase (247 aa).

Residues Tyr38, Gly63–Ser65, Asn131, and Arg198 each bind S-adenosyl-L-methionine.

It belongs to the class I-like SAM-binding methyltransferase superfamily. Cx-SAM synthase family. In terms of assembly, homodimer.

The enzyme catalyses prephenate + S-adenosyl-L-methionine = carboxy-S-adenosyl-L-methionine + 3-phenylpyruvate + H2O. Catalyzes the conversion of S-adenosyl-L-methionine (SAM) to carboxy-S-adenosyl-L-methionine (Cx-SAM). This chain is Carboxy-S-adenosyl-L-methionine synthase, found in Desulforapulum autotrophicum (strain ATCC 43914 / DSM 3382 / VKM B-1955 / HRM2) (Desulfobacterium autotrophicum).